The following is a 256-amino-acid chain: Ras-related protein Rab-26 (256 aa).

Residues 1–51 (MSRKKTPKSKGASTPAASTLPTANGARPARSGTALSGPDAPPNGPLQPGRP) are disordered. Positions 12–23 (ASTPAASTLPTA) are enriched in low complexity. Ser72, Gly73, Val74, Gly75, Lys76, Thr77, Cys78, Ser95, and Thr96 together coordinate GTP. Thr77 provides a ligand contact to Mg(2+). Short sequence motifs (switch) lie at residues 86–101 (GAFL…GIDF) and 119–136 (DTAG…YYRD). Positions 96 and 119 each coordinate Mg(2+). Positions 122, 177, 178, 180, 208, and 209 each coordinate GTP. Residues Cys253 and Cys254 are each lipidated (S-geranylgeranyl cysteine).

It belongs to the small GTPase superfamily. Rab family. In terms of assembly, interacts with RIMS1. Interacts with ADRA2B. It depends on Mg(2+) as a cofactor. In terms of tissue distribution, predominantly expressed in brain.

Its subcellular location is the golgi apparatus membrane. The protein resides in the cytoplasmic vesicle. The protein localises to the secretory vesicle membrane. It catalyses the reaction GTP + H2O = GDP + phosphate + H(+). Its activity is regulated as follows. Regulated by guanine nucleotide exchange factors (GEFs) which promote the exchange of bound GDP for free GTP. Regulated by GTPase activating proteins (GAPs) which increase the GTP hydrolysis activity. Inhibited by GDP dissociation inhibitors (GDIs). Functionally, the small GTPases Rab are key regulators of intracellular membrane trafficking, from the formation of transport vesicles to their fusion with membranes. Rabs cycle between an inactive GDP-bound form and an active GTP-bound form that is able to recruit to membranes different set of downstream effectors directly responsible for vesicle formation, movement, tethering and fusion. RAB26 mediates transport of ADRA2A and ADRA2B from the Golgi to the cell membrane. Plays a role in the maturation of zymogenic granules and in pepsinogen secretion in the stomach. Plays a role in the secretion of amylase from acinar granules in the parotid gland. This Homo sapiens (Human) protein is Ras-related protein Rab-26.